Consider the following 434-residue polypeptide: MAAAAGSCARVAAWGGKLRRGLAVSRQAVRSPGPLAAAVAGAALAGAGAAWHHSRVSVAARDGSFTVSAQKNVEHGIIYIGKPSLRKQRFMQFSSLEHEGEYYMTPRDFLFSVMFEQMERKTSVKKLTKKDIEDTLSGIQTAGCGSTFFRDLGDKGLISYTEYLFLLTILTKPHSGFHVAFKMLDTDGNEMIEKREFFKLQKIISKQDDLMTVKTNETGYQEAIVKEPEINTTLQMRFFGKRGQRKLHYKEFRRFMENLQTEIQEMEFLQFSKGLSFMRKEDFAEWLLFFTNTENKDIYWKNVREKLSAGESISLDEFKSFCHFTTHLEDFAIAMQMFSLAHRPVRLAEFKRAVKVATGQELSNNILDTVFKIFDLDGDECLSHEEFLGVLKNRMHRGLWVPQHQSIQEYWKCVKKESIKGVKEVWKQAGKGLF.

The N-terminal 22 residues, 1–22, are a transit peptide targeting the mitochondrion; it reads MAAAAGSCARVAAWGGKLRRGL. Positions 172–207 constitute an EF-hand 1 domain; the sequence is KPHSGFHVAFKMLDTDGNEMIEKREFFKLQKIISKQ. Ca(2+) contacts are provided by Asp185, Asp187, Asn189, Met191, Glu193, and Glu196. At Ser205 the chain carries Phosphoserine. In terms of domain architecture, EF-hand 2; degenerate spans 227 to 262; the sequence is EPEINTTLQMRFFGKRGQRKLHYKEFRRFMENLQTE. The 36-residue stretch at 293–328 folds into the EF-hand 3; degenerate domain; the sequence is TENKDIYWKNVREKLSAGESISLDEFKSFCHFTTHL. Positions 362–397 constitute an EF-hand 4 domain; that stretch reads LSNNILDTVFKIFDLDGDECLSHEEFLGVLKNRMHR. Ca(2+)-binding residues include Asp375, Asp377, Asp379, Cys381, and Glu386.

Belongs to the MICU1 family. MICU2 subfamily. Heterodimer; disulfide-linked; heterodimerizes with MICU1. Component of the uniplex complex, composed of MCU, EMRE/SMDT1, MICU1 and MICU2 in a 4:4:1:1 stoichiometry.

It is found in the mitochondrion intermembrane space. It localises to the mitochondrion inner membrane. Functionally, calcium sensor of the mitochondrial calcium uniporter (MCU) channel, which senses calcium level via its EF-hand domains. MICU1 and MICU2 form a disulfide-linked heterodimer that stimulates and inhibits MCU activity, depending on the concentration of calcium. At low calcium levels, MICU1 occludes the pore of the MCU channel, preventing mitochondrial calcium uptake. At higher calcium levels, calcium-binding to MICU1 and MICU2 induces a conformational change that weakens MCU-MICU1 interactions and moves the MICU1-MICU2 heterodimer away from the pore, allowing calcium permeation through the MCU channel. In Homo sapiens (Human), this protein is Calcium uptake protein 2, mitochondrial.